Consider the following 67-residue polypeptide: ATP synthase F(0) complex subunit 8 (67 aa).

Residues 8-24 form a helical membrane-spanning segment; that stretch reads TWFTTIVAMILSLFILM. N6-acetyllysine; alternate is present on Lys-54. Lys-54 carries the post-translational modification N6-succinyllysine; alternate. N6-acetyllysine is present on Lys-57.

Belongs to the ATPase protein 8 family. As to quaternary structure, component of the ATP synthase complex composed at least of ATP5F1A/subunit alpha, ATP5F1B/subunit beta, ATP5MC1/subunit c (homooctomer), MT-ATP6/subunit a, MT-ATP8/subunit 8, ATP5ME/subunit e, ATP5MF/subunit f, ATP5MG/subunit g, ATP5MK/subunit k, ATP5MJ/subunit j, ATP5F1C/subunit gamma, ATP5F1D/subunit delta, ATP5F1E/subunit epsilon, ATP5PF/subunit F6, ATP5PB/subunit b, ATP5PD/subunit d, ATP5PO/subunit OSCP. ATP synthase complex consists of a soluble F(1) head domain (subunits alpha(3) and beta(3)) - the catalytic core - and a membrane F(0) domain - the membrane proton channel (subunits c, a, 8, e, f, g, k and j). These two domains are linked by a central stalk (subunits gamma, delta, and epsilon) rotating inside the F1 region and a stationary peripheral stalk (subunits F6, b, d, and OSCP). Interacts with PRICKLE3.

Its subcellular location is the mitochondrion membrane. Its function is as follows. Subunit 8, of the mitochondrial membrane ATP synthase complex (F(1)F(0) ATP synthase or Complex V) that produces ATP from ADP in the presence of a proton gradient across the membrane which is generated by electron transport complexes of the respiratory chain. ATP synthase complex consist of a soluble F(1) head domain - the catalytic core - and a membrane F(1) domain - the membrane proton channel. These two domains are linked by a central stalk rotating inside the F(1) region and a stationary peripheral stalk. During catalysis, ATP synthesis in the catalytic domain of F(1) is coupled via a rotary mechanism of the central stalk subunits to proton translocation. In vivo, can only synthesize ATP although its ATP hydrolase activity can be activated artificially in vitro. Part of the complex F(0) domain. The protein is ATP synthase F(0) complex subunit 8 of Oryctolagus cuniculus (Rabbit).